Reading from the N-terminus, the 617-residue chain is Probable Xaa-Pro aminopeptidase P (617 aa).

Mn(2+) is bound by residues aspartate 414, aspartate 425, glutamate 523, and glutamate 537.

This sequence belongs to the peptidase M24B family. Requires Mn(2+) as cofactor.

The enzyme catalyses Release of any N-terminal amino acid, including proline, that is linked to proline, even from a dipeptide or tripeptide.. In terms of biological role, catalyzes the removal of a penultimate prolyl residue from the N-termini of peptides. The polypeptide is Probable Xaa-Pro aminopeptidase P (AMPP) (Ajellomyces capsulatus (strain G186AR / H82 / ATCC MYA-2454 / RMSCC 2432) (Darling's disease fungus)).